We begin with the raw amino-acid sequence, 351 residues long: Uroporphyrinogen decarboxylase (351 aa).

Residues 26 to 30 (RQAGR), Asp76, Tyr153, Ser208, and His323 contribute to the substrate site.

Belongs to the uroporphyrinogen decarboxylase family. In terms of assembly, homodimer.

Its subcellular location is the cytoplasm. The enzyme catalyses uroporphyrinogen III + 4 H(+) = coproporphyrinogen III + 4 CO2. It participates in porphyrin-containing compound metabolism; protoporphyrin-IX biosynthesis; coproporphyrinogen-III from 5-aminolevulinate: step 4/4. Functionally, catalyzes the decarboxylation of four acetate groups of uroporphyrinogen-III to yield coproporphyrinogen-III. The polypeptide is Uroporphyrinogen decarboxylase (Prochlorococcus marinus (strain MIT 9211)).